A 230-amino-acid chain; its full sequence is MRIIGLTGGIATGKSTVARILERHGIPVADADQMARQALAVGSPIRERVLQRYGRAIQDPSGALDRRQLGRIVFADAAERAWLEAQIHPFVKARLREFLEAHGASAPPEEATEARPSCQCPHGEGHPTVCLMIPLLFEAHMENWASEIWVVTCTPEQQRQRLAQRDLLTAAEIEARLASQWPLEEKARRAHVVLDNSGSLAQLEAQVRQALGAHPREGGAICPTPPSRIE.

Positions 3–225 (IIGLTGGIAT…REGGAICPTP (223 aa)) constitute a DPCK domain. 11 to 16 (ATGKST) contacts ATP.

The protein belongs to the CoaE family.

It is found in the cytoplasm. It catalyses the reaction 3'-dephospho-CoA + ATP = ADP + CoA + H(+). The protein operates within cofactor biosynthesis; coenzyme A biosynthesis; CoA from (R)-pantothenate: step 5/5. In terms of biological role, catalyzes the phosphorylation of the 3'-hydroxyl group of dephosphocoenzyme A to form coenzyme A. The protein is Dephospho-CoA kinase of Synechococcus sp. (strain JA-3-3Ab) (Cyanobacteria bacterium Yellowstone A-Prime).